The chain runs to 177 residues: MEKNWYVVHTYSGYENKVKANLEKRVESMGMQDKIFRVVVPEEEETDIKNGKKKVVKKKVFPGYVLVEIVMTDDSWYVVRNTPGVTGFVGSAGSGSKPTPLLPGEAETILKRMGMDERKTDIDFELKETVKVIDGPFANFTGSIEEIDYDKSKVKVFVNMFGRETPVELEFTQIDKL.

The region spanning 128–156 (ETVKVIDGPFANFTGSIEEIDYDKSKVKV) is the KOW domain.

Belongs to the NusG family.

Participates in transcription elongation, termination and antitermination. Stimulates RNA polymerase pausing at U107 and U144 in the trp leader. NusG-stimulated pausing is sequence specific. Does not affect trp leader termination. This Bacillus subtilis (strain 168) protein is Transcription termination/antitermination protein NusG.